We begin with the raw amino-acid sequence, 248 residues long: Triosephosphate isomerase (248 aa).

9 to 11 (NWK) contacts substrate. Histidine 94 acts as the Electrophile in catalysis. Glutamate 166 serves as the catalytic Proton acceptor. Substrate-binding positions include glycine 172, serine 212, and 233–234 (GG).

The protein belongs to the triosephosphate isomerase family. In terms of assembly, homodimer.

The protein localises to the cytoplasm. The enzyme catalyses D-glyceraldehyde 3-phosphate = dihydroxyacetone phosphate. The protein operates within carbohydrate biosynthesis; gluconeogenesis. It participates in carbohydrate degradation; glycolysis; D-glyceraldehyde 3-phosphate from glycerone phosphate: step 1/1. Involved in the gluconeogenesis. Catalyzes stereospecifically the conversion of dihydroxyacetone phosphate (DHAP) to D-glyceraldehyde-3-phosphate (G3P). The chain is Triosephosphate isomerase from Clostridium botulinum (strain Loch Maree / Type A3).